Consider the following 1368-residue polypeptide: DNA-directed RNA polymerase subunit beta (1368 aa).

The protein belongs to the RNA polymerase beta chain family. As to quaternary structure, the RNAP catalytic core consists of 2 alpha, 1 beta, 1 beta' and 1 omega subunit. When a sigma factor is associated with the core the holoenzyme is formed, which can initiate transcription.

It catalyses the reaction RNA(n) + a ribonucleoside 5'-triphosphate = RNA(n+1) + diphosphate. Functionally, DNA-dependent RNA polymerase catalyzes the transcription of DNA into RNA using the four ribonucleoside triphosphates as substrates. This is DNA-directed RNA polymerase subunit beta from Cupriavidus pinatubonensis (strain JMP 134 / LMG 1197) (Cupriavidus necator (strain JMP 134)).